A 361-amino-acid polypeptide reads, in one-letter code: Phosphoserine aminotransferase (361 aa).

R42 is a binding site for L-glutamate. Pyridoxal 5'-phosphate is bound by residues A76 to R77, W102, T153, D173, and Q196. At K197 the chain carries N6-(pyridoxal phosphate)lysine. Residue N238–T239 coordinates pyridoxal 5'-phosphate.

It belongs to the class-V pyridoxal-phosphate-dependent aminotransferase family. SerC subfamily. Homodimer. The cofactor is pyridoxal 5'-phosphate.

The protein localises to the cytoplasm. It carries out the reaction O-phospho-L-serine + 2-oxoglutarate = 3-phosphooxypyruvate + L-glutamate. It catalyses the reaction 4-(phosphooxy)-L-threonine + 2-oxoglutarate = (R)-3-hydroxy-2-oxo-4-phosphooxybutanoate + L-glutamate. It functions in the pathway amino-acid biosynthesis; L-serine biosynthesis; L-serine from 3-phospho-D-glycerate: step 2/3. The protein operates within cofactor biosynthesis; pyridoxine 5'-phosphate biosynthesis; pyridoxine 5'-phosphate from D-erythrose 4-phosphate: step 3/5. Catalyzes the reversible conversion of 3-phosphohydroxypyruvate to phosphoserine and of 3-hydroxy-2-oxo-4-phosphonooxybutanoate to phosphohydroxythreonine. In Yersinia enterocolitica serotype O:8 / biotype 1B (strain NCTC 13174 / 8081), this protein is Phosphoserine aminotransferase.